The chain runs to 275 residues: T cell receptor alpha chain MC.7.G5 (275 aa).

The signal sequence occupies residues 1 to 21; the sequence is MACPGFLWALVISTCLEFSMA. Positions 22–116 constitute an Ig-like V-type domain; it reads QTVTQSQPEM…AAMYFCAYRS (95 aa). Residues 22 to 116 are t cell receptor alpha variable 38-2DV8; it reads QTVTQSQPEM…AAMYFCAYRS (95 aa). Cysteines 43 and 112 form a disulfide. The tract at residues 47–53 is CDR1; the sequence is TSESDYY. Positions 71 to 81 are CDR2; it reads QEAYKQQNATE. Residue Asn78 is glycosylated (N-linked (GlcNAc...) asparagine). The tract at residues 112 to 124 is CDR3; it reads CAYRSAVNARLMF. The interval 119-134 is t cell receptor alpha joining 31; it reads NARLMFGDGTQLVVKP. Residues 136-275 form a t cell receptor alpha constant region; it reads IQNPDPAVYQ…LLMTLRLWSS (140 aa). An Ig-like C1-type domain is found at 154–242; sequence KSVCLFTDFD…LVEKSFETDT (89 aa). Cys157 and Cys207 are oxidised to a cystine. N-linked (GlcNAc...) asparagine glycosylation is found at Asn167, Asn201, Asn212, and Asn248. The tract at residues 229-250 is connecting peptide; the sequence is CDVKLVEKSFETDTNLNFQNLS. Residues 251-273 traverse the membrane as a helical segment; it reads VIGFRILLLKVAGFNLLMTLRLW. Topologically, residues 274–275 are cytoplasmic; the sequence is SS.

As to quaternary structure, disulfide-linked heterodimer with TRBV25-1*01J2S3*01C2*01 beta chain. The alpha-beta TR associates with the transmembrane signaling CD3 coreceptor proteins to form the TR-CD3 (TCR). The assembly of alpha-beta TR heterodimers with CD3 occurs in the endoplasmic reticulum where a single alpha-beta TR heterodimer associates with one CD3D-CD3E heterodimer, one CD3G-CD3E heterodimer and one CD247 homodimer forming a stable octameric structure. CD3D-CD3E and CD3G-CD3E heterodimers preferentially associate with TR alpha and TR beta chains (via TM domain), respectively. The association of the CD247 homodimer is the last step of TCR assembly in the endoplasmic reticulum and is required for transport to the cell surface. Expressed in MR1-restricted CD8-positive T cells.

The protein localises to the cell membrane. Its function is as follows. The alpha chain of TRAV38-2DV8*01J31*01C*01/TRBV25-1*01J2S3*01C2*01 alpha-beta T cell receptor (TR) clonotype that displays pan-cancer cell recognition via the invariant MR1 molecule. On CD8-positive T cell clone MC.7.G5, likely recognizes tumor-specific or -associated metabolite(s) essential for cancer cell survival, triggering killing of many cancer cell types including lung, melanoma, leukemia, colon, breast, prostate, bone and ovarian cancer cells. Mediates cancer cell cytotoxicity in an HLA-independent manner. Has no reactivity to healthy cells, even stressed or infected by bacteria. Antigen recognition initiates TR-CD3 clustering on the cell surface and intracellular activation of LCK that phosphorylates the ITAM motifs of CD3G, CD3D, CD3E and CD247 enabling the recruitment of ZAP70. In turn, ZAP70 phosphorylates LAT, which recruits numerous signaling molecules to form the LAT signalosome. The LAT signalosome propagates signal branching to three major signaling pathways, the calcium, the mitogen-activated protein kinase (MAPK) kinase and the nuclear factor NF-kappa-B (NF-kB) pathways, leading to the mobilization of transcription factors that are critical for gene expression and essential for T cell differentiation into effector/memory T cells. In Homo sapiens (Human), this protein is T cell receptor alpha chain MC.7.G5.